The following is a 228-amino-acid chain: Urease accessory protein UreF (228 aa).

It belongs to the UreF family. As to quaternary structure, ureD, UreF and UreG form a complex that acts as a GTP-hydrolysis-dependent molecular chaperone, activating the urease apoprotein by helping to assemble the nickel containing metallocenter of UreC. The UreE protein probably delivers the nickel.

It is found in the cytoplasm. Functionally, required for maturation of urease via the functional incorporation of the urease nickel metallocenter. The polypeptide is Urease accessory protein UreF (Yersinia pestis bv. Antiqua (strain Antiqua)).